The chain runs to 303 residues: Coenzyme PQQ synthesis protein B (303 aa).

It belongs to the PqqB family.

It participates in cofactor biosynthesis; pyrroloquinoline quinone biosynthesis. Functionally, may be involved in the transport of PQQ or its precursor to the periplasm. This chain is Coenzyme PQQ synthesis protein B, found in Pseudomonas putida (strain GB-1).